Reading from the N-terminus, the 156-residue chain is Small ribosomal subunit protein uS7 (156 aa).

It belongs to the universal ribosomal protein uS7 family. As to quaternary structure, part of the 30S ribosomal subunit. Contacts proteins S9 and S11.

Functionally, one of the primary rRNA binding proteins, it binds directly to 16S rRNA where it nucleates assembly of the head domain of the 30S subunit. Is located at the subunit interface close to the decoding center, probably blocks exit of the E-site tRNA. This chain is Small ribosomal subunit protein uS7, found in Pseudomonas entomophila (strain L48).